The primary structure comprises 239 residues: ATP-dependent dethiobiotin synthetase BioD (239 aa).

15–20 (EIGKTF) contributes to the ATP binding site. Thr19 provides a ligand contact to Mg(2+). The active site involves Lys40. Residues Asp57, 118 to 121 (EGVG), and 178 to 179 (NH) each bind ATP. Mg(2+) is bound by residues Asp57 and Glu118.

It belongs to the dethiobiotin synthetase family. Homodimer. Mg(2+) serves as cofactor.

It is found in the cytoplasm. The catalysed reaction is (7R,8S)-7,8-diammoniononanoate + CO2 + ATP = (4R,5S)-dethiobiotin + ADP + phosphate + 3 H(+). The protein operates within cofactor biosynthesis; biotin biosynthesis; biotin from 7,8-diaminononanoate: step 1/2. Functionally, catalyzes a mechanistically unusual reaction, the ATP-dependent insertion of CO2 between the N7 and N8 nitrogen atoms of 7,8-diaminopelargonic acid (DAPA, also called 7,8-diammoniononanoate) to form a ureido ring. This Burkholderia ambifaria (strain ATCC BAA-244 / DSM 16087 / CCUG 44356 / LMG 19182 / AMMD) (Burkholderia cepacia (strain AMMD)) protein is ATP-dependent dethiobiotin synthetase BioD.